Here is a 226-residue protein sequence, read N- to C-terminus: Octanoyltransferase (226 aa).

One can recognise a BPL/LPL catalytic domain in the interval 37–220 (GTAGELIWLL…SFSKVFGPVE (184 aa)). Substrate contacts are provided by residues 76-83 (RGGQFTYH), 151-153 (AIG), and 164-166 (GIS). Cys-182 functions as the Acyl-thioester intermediate in the catalytic mechanism.

Belongs to the LipB family.

The protein localises to the cytoplasm. The enzyme catalyses octanoyl-[ACP] + L-lysyl-[protein] = N(6)-octanoyl-L-lysyl-[protein] + holo-[ACP] + H(+). Its pathway is protein modification; protein lipoylation via endogenous pathway; protein N(6)-(lipoyl)lysine from octanoyl-[acyl-carrier-protein]: step 1/2. Functionally, catalyzes the transfer of endogenously produced octanoic acid from octanoyl-acyl-carrier-protein onto the lipoyl domains of lipoate-dependent enzymes. Lipoyl-ACP can also act as a substrate although octanoyl-ACP is likely to be the physiological substrate. The polypeptide is Octanoyltransferase (Caulobacter vibrioides (strain ATCC 19089 / CIP 103742 / CB 15) (Caulobacter crescentus)).